We begin with the raw amino-acid sequence, 922 residues long: uncharacterized protein (922 aa).

5 disordered regions span residues 459-522, 539-627, 649-668, 692-835, and 856-879; these read SLQD…QPKN, SNSA…SSLG, GFSS…RQPF, QKLD…VTSL, and PWRK…RPER. A compositionally biased stretch (basic residues) spans 546 to 567; that stretch reads KAKHSSNKPHKAASSRISKTKS. A compositionally biased stretch (basic and acidic residues) spans 582-600; the sequence is KKSEESKQSGKKVKVEEKQ. Over residues 651–660 the composition is skewed to low complexity; sequence SSSRTLGSSS. A compositionally biased stretch (basic and acidic residues) spans 692–702; it reads QKLDGSAEKEC. Polar residues-rich tracts occupy residues 755-779 and 790-824; these read DSTN…SLTG and KATQ…SSLQ. A coiled-coil region spans residues 872–899; it reads TEEQRPEREAMKRKAQQERENAAKYTSL.

This is an uncharacterized protein from Homo sapiens (Human).